Reading from the N-terminus, the 376-residue chain is S-adenosylmethionine synthase (376 aa).

His14 serves as a coordination point for ATP. Asp16 provides a ligand contact to Mg(2+). Residue Glu42 coordinates K(+). Glu55 and Gln98 together coordinate L-methionine. Residues 98 to 108 form a flexible loop region; sequence QSPEIALGISS. ATP contacts are provided by residues 158-160, 224-225, Asp233, 239-240, Ala256, and Lys260; these read DGK, RF, and RK. An L-methionine-binding site is contributed by Asp233. Position 264 (Lys264) interacts with L-methionine.

It belongs to the AdoMet synthase family. In terms of assembly, homotetramer; dimer of dimers. Mg(2+) is required as a cofactor. The cofactor is K(+).

It localises to the cytoplasm. It carries out the reaction L-methionine + ATP + H2O = S-adenosyl-L-methionine + phosphate + diphosphate. Its pathway is amino-acid biosynthesis; S-adenosyl-L-methionine biosynthesis; S-adenosyl-L-methionine from L-methionine: step 1/1. Its function is as follows. Catalyzes the formation of S-adenosylmethionine (AdoMet) from methionine and ATP. The overall synthetic reaction is composed of two sequential steps, AdoMet formation and the subsequent tripolyphosphate hydrolysis which occurs prior to release of AdoMet from the enzyme. The sequence is that of S-adenosylmethionine synthase from Aquifex aeolicus (strain VF5).